Reading from the N-terminus, the 485-residue chain is G2/mitotic-specific cyclin-A1 (485 aa).

The tract at residues 1-24 (MRSALSLKPSNGNAAKSQAVNNKN) is disordered. Positions 8–24 (KPSNGNAAKSQAVNNKN) are enriched in polar residues.

Belongs to the cyclin family. Cyclin AB subfamily. In terms of tissue distribution, expressed in the cell lineages ABarp, C and E as well as the NSM neuroblasts.

In terms of biological role, involved in the control of the cell cycle after S phase. May bind to and activate cdk-1 and/or cdk-2 to promote cell cycle progression. Necessary for embryogenesis. This Caenorhabditis elegans protein is G2/mitotic-specific cyclin-A1 (cya-1).